Consider the following 596-residue polypeptide: UvrABC system protein C (596 aa).

Residues 16–95 (SSPGVYRFYS…IKENKPKYNV (80 aa)) enclose the GIY-YIG domain. The region spanning 209-244 (SSVKKYYQEKMLSAAEDMQFEKAQFFKERYNSVLGL) is the UVR domain.

This sequence belongs to the UvrC family. As to quaternary structure, interacts with UvrB in an incision complex.

It is found in the cytoplasm. The UvrABC repair system catalyzes the recognition and processing of DNA lesions. UvrC both incises the 5' and 3' sides of the lesion. The N-terminal half is responsible for the 3' incision and the C-terminal half is responsible for the 5' incision. The polypeptide is UvrABC system protein C (Cytophaga hutchinsonii (strain ATCC 33406 / DSM 1761 / CIP 103989 / NBRC 15051 / NCIMB 9469 / D465)).